The following is a 396-amino-acid chain: Protein BOP3 (396 aa).

6 disordered regions span residues 1-22, 98-126, 145-168, 203-239, 254-274, and 355-396; these read MSTF…NNVN, GVPA…ENLP, PTPM…GISH, VARR…KFTN, RDQQ…QQDL, and REGR…LNST. Polar residues-rich tracts occupy residues 111 to 124, 159 to 168, and 210 to 230; these read QPHN…SSEN, ASSSTGGISH, and GTKS…SRNL. Residues 355-369 show a composition bias toward basic and acidic residues; the sequence is REGRQVHDDLDDRTC. Residues 370-396 show a composition bias toward polar residues; that stretch reads SESSSRNESPVRTITKDNSVGKILNST.

It is found in the cytoplasm. The protein localises to the nucleus. Functionally, involved in resistance to methylmercury. Overexpression suppresses a PAM1-SLV3 double null mutation. The sequence is that of Protein BOP3 (BOP3) from Saccharomyces cerevisiae (strain ATCC 204508 / S288c) (Baker's yeast).